Reading from the N-terminus, the 231-residue chain is Large ribosomal subunit protein uL1 (231 aa).

The protein belongs to the universal ribosomal protein uL1 family. In terms of assembly, part of the 50S ribosomal subunit.

Its function is as follows. Binds directly to 23S rRNA. The L1 stalk is quite mobile in the ribosome, and is involved in E site tRNA release. In terms of biological role, protein L1 is also a translational repressor protein, it controls the translation of the L11 operon by binding to its mRNA. The protein is Large ribosomal subunit protein uL1 of Azotobacter vinelandii (strain DJ / ATCC BAA-1303).